A 378-amino-acid polypeptide reads, in one-letter code: Cytochrome b (378 aa).

4 consecutive transmembrane segments (helical) span residues 33 to 53 (SGSL…FLSM), 77 to 98 (WLIR…YFHI), 113 to 133 (XNVG…GYVL), and 178 to 198 (FFAF…IHLI). Residues H83 and H97 each contribute to the heme b site. Position 196 (H196) interacts with heme b. Residue H201 coordinates a ubiquinone. The next 4 helical transmembrane spans lie at 226–246 (FKDL…ALFS), 288–308 (LGGV…PILH), 320–340 (LTQF…WIGG), and 347–367 (FIII…VLFP).

Belongs to the cytochrome b family. In terms of assembly, the cytochrome bc1 complex contains 3 respiratory subunits (MT-CYB, CYC1 and UQCRFS1), 2 core proteins (UQCRC1 and UQCRC2) and probably 6 low-molecular weight proteins. Heme b is required as a cofactor.

It localises to the mitochondrion inner membrane. Functionally, component of the ubiquinol-cytochrome c reductase complex (complex III or cytochrome b-c1 complex) that is part of the mitochondrial respiratory chain. The b-c1 complex mediates electron transfer from ubiquinol to cytochrome c. Contributes to the generation of a proton gradient across the mitochondrial membrane that is then used for ATP synthesis. The polypeptide is Cytochrome b (mt-cyb) (Nannacara anomala (Goldeneye cichlid)).